The following is a 177-amino-acid chain: UPF0200 protein STK_09500 (177 aa).

Residue 11 to 18 participates in ATP binding; the sequence is GMPGSGKG.

This sequence belongs to the UPF0200 family.

The protein is UPF0200 protein STK_09500 of Sulfurisphaera tokodaii (strain DSM 16993 / JCM 10545 / NBRC 100140 / 7) (Sulfolobus tokodaii).